We begin with the raw amino-acid sequence, 195 residues long: MAKLYFNYSTMNAGKSTLLLQASYNYIERGMQTYLLTANFDDRAGMGRIGSRIGIEAEADTYTQSDDLFAKIDARLKAGPCACVLVDEAQWMTRDQVWQLARAVDDLGVPVMCYGLRVDFRGELFPGSAALLALADEMREVRTICHCGRKATMVIRVGEDGNALAEGAQIEVGGNDRYISLCRKHFREAVGDVPV.

ATP contacts are provided by residues 9-16 and 87-90; these read STMNAGKS and DEAQ. E88 acts as the Proton acceptor in catalysis. Zn(2+) is bound by residues C145, C147, C182, and H185.

It belongs to the thymidine kinase family. In terms of assembly, homotetramer.

The protein resides in the cytoplasm. The enzyme catalyses thymidine + ATP = dTMP + ADP + H(+). The chain is Thymidine kinase from Jannaschia sp. (strain CCS1).